We begin with the raw amino-acid sequence, 212 residues long: Ras-related protein Rab-15 (212 aa).

Positions 17, 18, 19, 20, 21, 22, 23, 35, 39, and 40 each coordinate GTP. Residue threonine 22 coordinates Mg(2+). 2 short sequence motifs (switch) span residues 31–45 (NEFHSSHISTIGVDF) and 63–80 (DTAGQERYQTITKQYYRR). Mg(2+) is bound by residues threonine 40 and aspartate 63. Residues glycine 66, asparagine 121, lysine 122, aspartate 124, serine 151, and alanine 152 each coordinate GTP. The segment at 192–212 (ELEEDEGKPEGPANSSKTCWC) is disordered. Residues cysteine 210 and cysteine 212 are each lipidated (S-geranylgeranyl cysteine). Cysteine 212 bears the Cysteine methyl ester mark.

This sequence belongs to the small GTPase superfamily. Rab family. The GTP bound form of RAB15 interacts with REP15. Interacts (GTP-bound form) with MICAL1, MICAL3, MICALCL, EHBP1 and EHBP1L1. Mg(2+) is required as a cofactor.

The protein localises to the cell membrane. The enzyme catalyses GTP + H2O = GDP + phosphate + H(+). With respect to regulation, regulated by guanine nucleotide exchange factors (GEFs) which promote the exchange of bound GDP for free GTP. Regulated by GTPase activating proteins (GAPs) which increase the GTP hydrolysis activity. Inhibited by GDP dissociation inhibitors (GDIs). Its function is as follows. The small GTPases Rab are key regulators of intracellular membrane trafficking, from the formation of transport vesicles to their fusion with membranes. Rabs cycle between an inactive GDP-bound form and an active GTP-bound form that is able to recruit to membranes different sets of downstream effectors directly responsible for vesicle formation, movement, tethering and fusion. RAB15 may act in concert with RAB3A in regulating aspects of synaptic vesicle membrane flow within the nerve terminal. This chain is Ras-related protein Rab-15 (RAB15), found in Bos taurus (Bovine).